Consider the following 185-residue polypeptide: Ribosome maturation factor RimP (185 aa).

The tract at residues 162–185 (VRLERAADGAPERGGDRGDTEESR) is disordered.

Belongs to the RimP family.

It is found in the cytoplasm. In terms of biological role, required for maturation of 30S ribosomal subunits. The sequence is that of Ribosome maturation factor RimP from Saccharopolyspora erythraea (strain ATCC 11635 / DSM 40517 / JCM 4748 / NBRC 13426 / NCIMB 8594 / NRRL 2338).